The chain runs to 348 residues: Photosystem II protein D1 (348 aa).

Transmembrane regions (helical) follow at residues 33-50 (YIGW…LATV), 122-137 (HFIF…EWEF), and 146-160 (WIFV…ASCA). Chlorophyll a is bound at residue H122. Residue W130 coordinates pheophytin a. Positions 174 and 193 each coordinate [CaMn4O5] cluster. The helical transmembrane segment at 201 to 222 (FHILGVAGVFGGSLFSAMHGSL) threads the bilayer. Position 202 (H202) interacts with chlorophyll a. A quinone contacts are provided by residues H219 and 268–269 (SF). Fe cation is bound at residue H219. H276 serves as a coordination point for Fe cation. The chain crosses the membrane as a helical span at residues 278–292 (FLAAWPVIGIWFTAL). 4 residues coordinate [CaMn4O5] cluster: H336, E337, D346, and A348.

This sequence belongs to the reaction center PufL/M/PsbA/D family. PSII is composed of 1 copy each of membrane proteins PsbA, PsbB, PsbC, PsbD, PsbE, PsbF, PsbH, PsbI, PsbJ, PsbK, PsbL, PsbM, PsbT, PsbX, PsbY, PsbZ, Psb30/Ycf12, at least 3 peripheral proteins of the oxygen-evolving complex and a large number of cofactors. It forms dimeric complexes. It depends on The D1/D2 heterodimer binds P680, chlorophylls that are the primary electron donor of PSII, and subsequent electron acceptors. It shares a non-heme iron and each subunit binds pheophytin, quinone, additional chlorophylls, carotenoids and lipids. D1 provides most of the ligands for the Mn4-Ca-O5 cluster of the oxygen-evolving complex (OEC). There is also a Cl(-1) ion associated with D1 and D2, which is required for oxygen evolution. The PSII complex binds additional chlorophylls, carotenoids and specific lipids. as a cofactor. Tyr-165 forms a radical intermediate that is referred to as redox-active TyrZ, YZ or Y-Z.

The protein localises to the plastid. It localises to the chloroplast thylakoid membrane. It catalyses the reaction 2 a plastoquinone + 4 hnu + 2 H2O = 2 a plastoquinol + O2. Functionally, photosystem II (PSII) is a light-driven water:plastoquinone oxidoreductase that uses light energy to abstract electrons from H(2)O, generating O(2) and a proton gradient subsequently used for ATP formation. It consists of a core antenna complex that captures photons, and an electron transfer chain that converts photonic excitation into a charge separation. The D1/D2 (PsbA/PsbD) reaction center heterodimer binds P680, the primary electron donor of PSII as well as several subsequent electron acceptors. This is Photosystem II protein D1 from Heterocapsa rotundata (Dinoflagellate).